Reading from the N-terminus, the 1516-residue chain is Alpha-2-macroglobulin homolog (1516 aa).

The signal sequence occupies residues methionine 1–alanine 26.

It belongs to the protease inhibitor I39 (alpha-2-macroglobulin) family. Bacterial alpha-2-macroglobulin subfamily.

In Pseudomonas aeruginosa (strain ATCC 15692 / DSM 22644 / CIP 104116 / JCM 14847 / LMG 12228 / 1C / PRS 101 / PAO1), this protein is Alpha-2-macroglobulin homolog.